Here is a 234-residue protein sequence, read N- to C-terminus: UPF0502 protein Bphyt_5265 (234 aa).

The protein belongs to the UPF0502 family.

This Paraburkholderia phytofirmans (strain DSM 17436 / LMG 22146 / PsJN) (Burkholderia phytofirmans) protein is UPF0502 protein Bphyt_5265.